The chain runs to 77 residues: Acyl carrier protein (77 aa).

Positions 1–77 (MSVEAKVKKI…DAIEYIRKKS (77 aa)) constitute a Carrier domain. At serine 37 the chain carries O-(pantetheine 4'-phosphoryl)serine.

It belongs to the acyl carrier protein (ACP) family. In terms of processing, 4'-phosphopantetheine is transferred from CoA to a specific serine of apo-ACP by AcpS. This modification is essential for activity because fatty acids are bound in thioester linkage to the sulfhydryl of the prosthetic group.

It is found in the cytoplasm. It functions in the pathway lipid metabolism; fatty acid biosynthesis. Functionally, carrier of the growing fatty acid chain in fatty acid biosynthesis. This is Acyl carrier protein from Desulforapulum autotrophicum (strain ATCC 43914 / DSM 3382 / VKM B-1955 / HRM2) (Desulfobacterium autotrophicum).